Consider the following 167-residue polypeptide: CS6 fimbrial subunit B (167 aa).

Residues 1-21 (MLKKIIPAIVLIAGTSGVVNA) form the signal peptide.

The protein resides in the fimbrium. The protein is CS6 fimbrial subunit B (cssB) of Escherichia coli.